The sequence spans 2752 residues: Protein PFF0380w (2752 aa).

Residues 20–30 are compositionally biased toward basic and acidic residues; that stretch reads EREKEEEEKKR. Disordered regions lie at residues 20-44, 139-160, 634-678, 1048-1130, and 1153-1172; these read EREK…NNYN, HIHK…NNDY, NDIV…INMK, DKKS…SGEN, and ENLQ…NNNG. Residues 32 to 44 are compositionally biased toward low complexity; the sequence is YNISNNNNNNNYN. The span at 142–157 shows a compositional bias: basic and acidic residues; that stretch reads KNNDINNIHEKNDKSN. Over residues 640 to 674 the composition is skewed to low complexity; it reads NNNNNNNNNNNNNNNNNNNNNNNNNNNNNNNNNNN. Residues 1048–1060 show a composition bias toward basic and acidic residues; it reads DKKSEDMKEDTPT. A compositionally biased stretch (polar residues) spans 1061–1075; the sequence is RGENLQRGQNLQRGD. Basic and acidic residues predominate over residues 1076–1090; it reads NLQRGDNLQRGDNLQ. Residues 1091-1130 are compositionally biased toward polar residues; it reads RGDNLQNGDNLQNGDNLQRGDNLQNGENLQSGENLQSGEN. Positions 1162–1172 are enriched in low complexity; it reads NNILYPYNNNG. Residues 1277 to 1354 form the HTH OST-type domain; that stretch reads TLEEVLEIIS…LHRTHIQHKK (78 aa). Disordered stretches follow at residues 1457–1499, 1958–1999, 2063–2099, and 2501–2537; these read DIKQ…NNIS, AKNS…YYML, KRKN…NNDK, and DENN…FLHN. 2 stretches are compositionally biased toward low complexity: residues 1469 to 1499 and 1962 to 1975; these read NNIN…NNIS and NQEN…NYNN. Residues 1976-1994 show a composition bias toward acidic residues; it reads NDDDDDNNNNNNDDDDDDN. 2 stretches are compositionally biased toward low complexity: residues 2068 to 2095 and 2501 to 2526; these read NIHN…NNDN and DENN…VLHN.

This chain is Protein PFF0380w, found in Plasmodium falciparum (isolate 3D7).